The following is a 373-amino-acid chain: Cyclin-A3-1 (373 aa).

The disordered stretch occupies residues 50–80 (AVVLKPQPAPRGGKRAASHAAEPKKPAPPPA).

It belongs to the cyclin family. Cyclin AB subfamily.

In Oryza sativa subsp. japonica (Rice), this protein is Cyclin-A3-1 (CYCA3-1).